The sequence spans 288 residues: Hyaluronidase (288 aa).

A glycan (N-linked (GlcNAc...) asparagine) is linked at Asn-36. Glu-66 acts as the Proton donor in catalysis. Cys-142 and Cys-154 form a disulfide bridge. Asn-282 is a glycosylation site (N-linked (GlcNAc...) asparagine).

This sequence belongs to the glycosyl hydrolase 56 family. In terms of tissue distribution, expressed by the venom gland.

It is found in the secreted. It carries out the reaction Random hydrolysis of (1-&gt;4)-linkages between N-acetyl-beta-D-glucosamine and D-glucuronate residues in hyaluronate.. In terms of biological role, hydrolyzes high molecular weight hyaluronic acid to produce small oligosaccharides. The chain is Hyaluronidase from Polybia paulista (Neotropical social wasp).